The sequence spans 341 residues: Oxidoreductase swnN (341 aa).

The protein belongs to the NmrA-type oxidoreductase family. Isoflavone reductase subfamily.

Its pathway is mycotoxin biosynthesis. In terms of biological role, oxidoreductase; part of the gene cluster that mediates the biosynthesis of swainsonine (SW), a cytotoxic fungal alkaloid and a potential cancer therapy drug. Swainsonine production occurs via a multibranched pathway and is dispensable for fungal colonization of plants and infection of insect hosts. The first step of swainsonine biosynthesis is the production of the precursor pipecolic acid (PA) via conversion of L-lysine (Lys) to 1-piperideine-6-carboxylate (P6C) by the aminotransferase swnA, the latter being further reduced to PA by the reductase swnR. PA can be converted from lysine by both the SW biosynthetic cluster and the unclustered genes such as lysine cyclodeaminase. The PKS-NRPS hybrid synthetase swnK uptakes and condensates PA and malonyl-CoA with and without skipping of the ketoreductase (KR) domain in order to produce 3 intermediates, 1-oxoindolizidine, (1S)-1-hydroxyindolizin, and (1R)-1-hydroxyindolizine; with the transisomer (1S)-1-hydroxyindolizin being predominant. The terminal thioester reductase (TE) domain of swnK is involved in reduction of the thioester bond to release the intermediate aldehydes. The oxidoreductase swnN could contribute to the reduction of 1-oxoindolizidine to (1S)-1-hydroxyindolizin and (1R)-1-hydroxyindolizine, contributing to the major route of SW production. The dioxygenase swnH2 would be responsible for the oxidization of (1R)-1-hydroxyindolizine into (1R,2S)-1,2-dihydroxyindolizine and of (1S)-1-hydroxyindolizin to yield both (1R,2S)-1,2-dihydroxyindolizine and (1S,2S)-1,2-dihydroxyindolizine. The dioxygenase swnH1 then performs the conversion of the 1,2-dihydroxyindolizine epimers to SW. The sequence is that of Oxidoreductase swnN from Metarhizium robertsii (strain ARSEF 23 / ATCC MYA-3075) (Metarhizium anisopliae (strain ARSEF 23)).